The sequence spans 28 residues: Cysteine-rich venom protein asurin-2 (28 aa).

Positions 1-15 are enriched in basic and acidic residues; it reads SNKKDYRKEIVDKHN. Positions 1–28 are disordered; it reads SNKKDYRKEIVDKHNALSRSVKPTASNM. The segment covering 17–28 has biased composition (polar residues); it reads LSRSVKPTASNM.

Belongs to the CRISP family. In terms of processing, contains 8 disulfide bonds. Expressed by the venom gland.

It localises to the secreted. Functionally, blocks contraction of smooth muscle elicited by high potassium-induced depolarization, but does not block caffeine-stimulated contraction. May target voltage-gated calcium channels on smooth muscle. This is Cysteine-rich venom protein asurin-2 from Austrelaps superbus (Lowland copperhead snake).